The primary structure comprises 176 residues: Ribosome maturation factor RimP (176 aa).

It belongs to the RimP family.

The protein resides in the cytoplasm. Functionally, required for maturation of 30S ribosomal subunits. In Chlorobium limicola (strain DSM 245 / NBRC 103803 / 6330), this protein is Ribosome maturation factor RimP.